The following is a 140-amino-acid chain: uncharacterized protein (140 aa).

The protein belongs to the asfivirus D129L family.

This is an uncharacterized protein from African swine fever virus (isolate Pig/Kenya/KEN-50/1950) (ASFV).